The primary structure comprises 400 residues: Elongation factor Tu (400 aa).

A tr-type G domain is found at 10–210; the sequence is KPHINVGTIG…ALDEYIPEPK (201 aa). A G1 region spans residues 19–26; sequence GHVDHGKT. 19-26 contacts GTP; sequence GHVDHGKT. Thr26 contributes to the Mg(2+) binding site. The G2 stretch occupies residues 64–68; that stretch reads GITIA. The G3 stretch occupies residues 85 to 88; it reads DCPG. Residues 85–89 and 140–143 each bind GTP; these read DCPGH and NKAD. Positions 140 to 143 are G4; that stretch reads NKAD. Residues 178-180 are G5; it reads SAL.

It belongs to the TRAFAC class translation factor GTPase superfamily. Classic translation factor GTPase family. EF-Tu/EF-1A subfamily. As to quaternary structure, monomer.

The protein resides in the cytoplasm. It catalyses the reaction GTP + H2O = GDP + phosphate + H(+). GTP hydrolase that promotes the GTP-dependent binding of aminoacyl-tRNA to the A-site of ribosomes during protein biosynthesis. This Rubrobacter xylanophilus (strain DSM 9941 / JCM 11954 / NBRC 16129 / PRD-1) protein is Elongation factor Tu.